A 599-amino-acid chain; its full sequence is Tail knob protein gp9 (599 aa).

It belongs to the picovirinae distal tube protein family. In terms of assembly, homohexamer; forms a hexameric tube structure with six flexible hydrophobic loops.

It is found in the virion. Its function is as follows. Distal (knob) tail protein that plugs the end of the tube before DNA ejection and forms a channel perforating the host membrane during ejection. The polypeptide is Tail knob protein gp9 (9) (Bacillus phage PZA (Bacteriophage PZA)).